The following is a 669-amino-acid chain: Threonine--tRNA ligase (669 aa).

Positions 3–60 (DAQQITLIVDGEETKVTEGTTGAELFFERRDVVVARVNGVLKDLDQVLTEGADVEGVT) constitute a TGS domain. Residues 260–566 (DHRKLGVELD…LTEHYAGAFP (307 aa)) form a catalytic region. Residues Cys-365, His-416, and His-543 each contribute to the Zn(2+) site.

This sequence belongs to the class-II aminoacyl-tRNA synthetase family. Homodimer. Requires Zn(2+) as cofactor.

Its subcellular location is the cytoplasm. The enzyme catalyses tRNA(Thr) + L-threonine + ATP = L-threonyl-tRNA(Thr) + AMP + diphosphate + H(+). In terms of biological role, catalyzes the attachment of threonine to tRNA(Thr) in a two-step reaction: L-threonine is first activated by ATP to form Thr-AMP and then transferred to the acceptor end of tRNA(Thr). Also edits incorrectly charged L-seryl-tRNA(Thr). The polypeptide is Threonine--tRNA ligase (Paenarthrobacter aurescens (strain TC1)).